The following is a 129-amino-acid chain: Procyclic form-specific polypeptide A-beta (129 aa).

An N-terminal signal peptide occupies residues 1 to 27 (MAPRSLYLLAVLLFSANLFAGVGFAAA). Residues 27 to 111 (AAEGPEDKGL…PEPEPGAATL (85 aa)) are disordered. The segment covering 53 to 104 (DDTNGTDPDPEPEPEPEPEPEPEPEPEPEPEPEPEPEPEPEPEPEPEPEPEP) has biased composition (acidic residues). N56 carries an N-linked (GlcNAc...) asparagine glycan. Repeat copies occupy residues 59–60 (DP), 61–62 (DP), 63–64 (EP), 65–66 (EP), 67–68 (EP), 69–70 (EP), 71–72 (EP), 73–74 (EP), 75–76 (EP), 77–78 (EP), 79–80 (EP), 81–82 (EP), 83–84 (EP), 85–86 (EP), 87–88 (EP), 89–90 (EP), 91–92 (EP), 93–94 (EP), 95–96 (EP), 97–98 (EP), 99–100 (EP), 101–102 (EP), 103–104 (EP), and 105–106 (EP). The segment at 59-106 (DPDPEPEPEPEPEPEPEPEPEPEPEPEPEPEPEPEPEPEPEPEPEPEP) is 24 X 2 AA tandem repeats of [DE]-P. A lipid anchor (GPI-anchor amidated glycine) is attached at G107. A propeptide spanning residues 108–129 (AATLKSVALPFAIAAVGLVAAF) is cleaved from the precursor.

Its subcellular location is the cell membrane. Its function is as follows. Major surface antigen of procyclic forms. The protein is Procyclic form-specific polypeptide A-beta (PARPA-BETA) of Trypanosoma brucei brucei.